The following is a 132-amino-acid chain: Small ribosomal subunit protein uS11 (132 aa).

This sequence belongs to the universal ribosomal protein uS11 family. In terms of assembly, part of the 30S ribosomal subunit. Interacts with proteins S7 and S18. Binds to IF-3.

Functionally, located on the platform of the 30S subunit, it bridges several disparate RNA helices of the 16S rRNA. Forms part of the Shine-Dalgarno cleft in the 70S ribosome. The sequence is that of Small ribosomal subunit protein uS11 from Cupriavidus pinatubonensis (strain JMP 134 / LMG 1197) (Cupriavidus necator (strain JMP 134)).